The chain runs to 426 residues: MSKSENLYSAARELIPGGVNSPVRAFTGVGGTPLFIEKADGAYLYDVDGKAYIDYVGSWGPMVLGHNHPAIRNAVIEAAERGLSFGAPTEMEVKMAELVTNLVPTMDMVRMVNSGTEATMSAIRLARGFTGRDKIIKFEGCYHGHADCLLVKAGSGALTLGQPNSPGVPADFAKHTLTCTYNDLTSVRAAFEQYPQEIACIIVEPVAGNMNCVPPLPEFLPGLRALCDEFGALLIIDEVMTGFRVALAGAQDYYGVVPDLTCLGKIIGGGMPVGAFGGRRDVMDALAPTGPVYQAGTLSGNPIAMAAGFACLNEVAQPGIHETLDELTTRLAEGLLEAAEEANIPLVVNHVGGMFGIFFTDAESVTCYQDVMACDVERFKRFFHLMLEEGVYLAPSAFEAGFMSVAHSEEDINNTIDAARRVFAKL.

Residue lysine 265 is modified to N6-(pyridoxal phosphate)lysine.

This sequence belongs to the class-III pyridoxal-phosphate-dependent aminotransferase family. HemL subfamily. Homodimer. Requires pyridoxal 5'-phosphate as cofactor.

The protein localises to the cytoplasm. The catalysed reaction is (S)-4-amino-5-oxopentanoate = 5-aminolevulinate. It participates in porphyrin-containing compound metabolism; protoporphyrin-IX biosynthesis; 5-aminolevulinate from L-glutamyl-tRNA(Glu): step 2/2. This chain is Glutamate-1-semialdehyde 2,1-aminomutase, found in Salmonella newport (strain SL254).